The chain runs to 364 residues: Myeloid cell surface antigen CD33 (364 aa).

The first 17 residues, 1–17 (MPLLLLLPLLWAGALAM), serve as a signal peptide directing secretion. Topologically, residues 18-259 (DPNFWLQVQE…KQETRAGVVH (242 aa)) are extracellular. One can recognise an Ig-like V-type domain in the interval 19–135 (PNFWLQVQES…KYSYKSPQLS (117 aa)). Cystine bridges form between cysteine 36-cysteine 169, cysteine 41-cysteine 101, and cysteine 163-cysteine 212. Asparagine 100 and asparagine 113 each carry an N-linked (GlcNAc...) asparagine glycan. Arginine 119 contributes to the N-acetylneuraminate binding site. The Ig-like C2-type domain maps to 145 to 228 (PKILIPGTLE…AGVTTERTIQ (84 aa)). Glutamate 154 serves as a coordination point for D-galactose. N-linked (GlcNAc...) asparagine glycans are attached at residues asparagine 160, asparagine 209, and asparagine 230. A helical membrane pass occupies residues 260-282 (GAIGGAGVTALLALCLCLIFFIV). Residues 283–364 (KTHRRKAART…STEYSEVRTQ (82 aa)) lie on the Cytoplasmic side of the membrane. Residues 290–364 (ARTAVGRNDT…STEYSEVRTQ (75 aa)) are disordered. Short sequence motifs (ITIM motif) lie at residues 338-343 (LHYASL) and 356-361 (TEYSEV). Phosphotyrosine; by LCK occurs at positions 340 and 358.

The protein belongs to the immunoglobulin superfamily. SIGLEC (sialic acid binding Ig-like lectin) family. Homodimer; disulfide-linked. Interacts with PTPN6/SHP-1 and PTPN11/SHP-2 upon phosphorylation. Interacts with C1QA (via C-terminus); this interaction activates CD33 inhibitory motifs. Post-translationally, glycosylated. Glycosylation at Asn-100 is critical for regulating ligand recognition. Phosphorylation of Tyr-340 is involved in binding to PTPN6 and PTPN11. Phosphorylation of Tyr-358 is involved in binding to PTPN6. LCK phosphorylates Tyr-340 efficiently and Tyr-358 to a lesser extent. As to expression, monocytic/myeloid lineage cells. In the brain, CD33 is mainly expressed on microglial cells.

It is found in the cell membrane. The protein resides in the peroxisome. Sialic-acid-binding immunoglobulin-like lectin (Siglec) that plays a role in mediating cell-cell interactions and in maintaining immune cells in a resting state. Preferentially recognizes and binds alpha-2,3- and more avidly alpha-2,6-linked sialic acid-bearing glycans. Upon engagement of ligands such as C1q or syalylated glycoproteins, two immunoreceptor tyrosine-based inhibitory motifs (ITIMs) located in CD33 cytoplasmic tail are phosphorylated by Src-like kinases such as LCK. These phosphorylations provide docking sites for the recruitment and activation of protein-tyrosine phosphatases PTPN6/SHP-1 and PTPN11/SHP-2. In turn, these phosphatases regulate downstream pathways through dephosphorylation of signaling molecules. One of the repressive effect of CD33 on monocyte activation requires phosphoinositide 3-kinase/PI3K. The protein is Myeloid cell surface antigen CD33 (CD33) of Homo sapiens (Human).